Reading from the N-terminus, the 953-residue chain is Pyruvate, phosphate dikinase, chloroplastic (953 aa).

The N-terminal 77 residues, Met1 to Thr77, are a transit peptide targeting the chloroplast. Positions Pro55–Pro74 are disordered. Thr533 is subject to Phosphothreonine; by PDRP1. His535 (tele-phosphohistidine intermediate) is an active-site residue. Substrate-binding residues include Arg641, Arg698, Glu827, Gly848, Thr849, Asn850, and Asp851. Glu827 contacts Mg(2+). Residue Asp851 participates in Mg(2+) binding. Residue Cys913 is the Proton donor of the active site.

It belongs to the PEP-utilizing enzyme family. As to quaternary structure, homotetramer. The cofactor is Mg(2+). In terms of processing, phosphorylation of Thr-533 in the dark inactivates the enzyme. Dephosphorylation upon light stimulation reactivates the enzyme. Isoform 1 mainly localized in mesophyll cells and only a low level is found in bundle sheath cells. Isoform 2 is expressed in roots and stems.

The protein resides in the plastid. It localises to the chloroplast. Its subcellular location is the cytoplasm. It catalyses the reaction pyruvate + phosphate + ATP = phosphoenolpyruvate + AMP + diphosphate + H(+). It participates in photosynthesis; C4 acid pathway. Activated by light-induced dephosphorylation. Inhibited by dark-induced phosphorylation. Both reactions are catalyzed by PDRP1. Functionally, formation of phosphoenolpyruvate, which is the primary acceptor of CO(2) in C4 and some Crassulacean acid metabolism plants. The polypeptide is Pyruvate, phosphate dikinase, chloroplastic (PPDK) (Flaveria trinervia (Clustered yellowtops)).